Here is a 611-residue protein sequence, read N- to C-terminus: Rop guanine nucleotide exchange factor 5 (611 aa).

The tract at residues 1–62 is disordered; that stretch reads MENLVKSCAG…PPPPPSQILG (62 aa). The span at 34–51 shows a compositional bias: low complexity; sequence STSGASYESSSTTTVASS. The 385-residue stretch at 93–477 folds into the PRONE domain; sequence FKAKEMNSAD…DLTKQSDDNN (385 aa). 2 disordered regions span residues 513–541 and 588–611; these read TTPGFSPSMISPKKGERRTPYSSKDTNKI and DVEEEKKRNSTSVHQKGPPKYTVS. Over residues 525 to 541 the composition is skewed to basic and acidic residues; the sequence is KKGERRTPYSSKDTNKI.

In terms of biological role, guanine-nucleotide exchange factor (GEF) that acts as an activator of Rop (Rho of plants) GTPases by promoting the exchange of GDP for GTP. In Arabidopsis thaliana (Mouse-ear cress), this protein is Rop guanine nucleotide exchange factor 5 (ROPGEF5).